Consider the following 625-residue polypeptide: Grainyhead-like protein 2 homolog (625 aa).

Disordered regions lie at residues methionine 1–asparagine 24, valine 82–asparagine 112, and glutamate 428–lysine 453. The segment at methionine 1–glutamate 93 is transcription activation. Composition is skewed to polar residues over residues leucine 98–glycine 109 and glutamine 440–aspartate 451. The region spanning serine 244–isoleucine 482 is the Grh/CP2 DB domain.

This sequence belongs to the grh/CP2 family. Grainyhead subfamily. In terms of assembly, homodimer, also forms heterodimers with GRHL1 or GRHL3. As to expression, expressed in keratinocytes (at protein level). Highly expressed in placenta, prostate, brain and kidney. Lower-level expression in a variety of epithelial tissues such as thymus, lung, salivary gland, mammary gland and digestive tract. Expressed in the cochlear. Expressed in corneal epithelial cells, but not in the endothelium or stroma.

It localises to the nucleus. Its subcellular location is the membrane. In terms of biological role, transcription factor playing an important role in primary neurulation and in epithelial development. Binds directly to the consensus DNA sequence 5'-AACCGGTT-3' acting as an activator and repressor on distinct target genes. During embryogenesis, plays unique and cooperative roles with GRHL3 in establishing distinct zones of primary neurulation. Essential for closure 3 (rostral end of the forebrain), functions cooperatively with GRHL3 in closure 2 (forebrain/midbrain boundary) and posterior neuropore closure. Regulates epithelial morphogenesis acting as a target gene-associated transcriptional activator of apical junctional complex components. Up-regulates of CLDN3 and CLDN4, as well as of RAB25, which increases the CLDN4 protein and its localization at tight junctions. Comprises an essential component of the transcriptional machinery that establishes appropriate expression levels of CLDN4 and CDH1 in different types of epithelia. Exhibits functional redundancy with GRHL3 in epidermal morphogenetic events and epidermal wound repair. In lung, forms a regulatory loop with NKX2-1 that coordinates lung epithelial cell morphogenesis and differentiation. In keratinocytes, plays a role in telomerase activation during cellular proliferation, regulates TERT expression by binding to TERT promoter region and inhibiting DNA methylation at the 5'-CpG island, possibly by interfering with DNMT1 enzyme activity. In addition, impairs keratinocyte differentiation and epidermal function by inhibiting the expression of genes clustered at the epidermal differentiation complex (EDC) as well as GRHL1 and GRHL3 through epigenetic mechanisms. This is Grainyhead-like protein 2 homolog (GRHL2) from Homo sapiens (Human).